Reading from the N-terminus, the 558-residue chain is CTP synthase (558 aa).

The tract at residues 1 to 267 (MAKFVFVTGG…CLEMLDVLNL (267 aa)) is amidoligase domain. S13 contacts CTP. UTP is bound at residue S13. ATP-binding positions include 14 to 19 (SIGKGI) and D71. The Mg(2+) site is built by D71 and E141. CTP is bound by residues 148–150 (DIE), 188–193 (KTKPTQ), and K224. UTP-binding positions include 188 to 193 (KTKPTQ) and K224. The Glutamine amidotransferase type-1 domain maps to 292–534 (KVALVGKYVQ…IEAAQLRLPA (243 aa)). G354 provides a ligand contact to L-glutamine. C381 serves as the catalytic Nucleophile; for glutamine hydrolysis. Residues 382-385 (LGMQ), E405, and R462 each bind L-glutamine. Catalysis depends on residues H507 and E509. Residues 536–558 (PDEALRRQSQTNISAQEKPSRIG) are disordered. Residues 542–552 (RQSQTNISAQE) are compositionally biased toward polar residues.

Belongs to the CTP synthase family. In terms of assembly, homotetramer.

The catalysed reaction is UTP + L-glutamine + ATP + H2O = CTP + L-glutamate + ADP + phosphate + 2 H(+). It carries out the reaction L-glutamine + H2O = L-glutamate + NH4(+). The enzyme catalyses UTP + NH4(+) + ATP = CTP + ADP + phosphate + 2 H(+). The protein operates within pyrimidine metabolism; CTP biosynthesis via de novo pathway; CTP from UDP: step 2/2. With respect to regulation, allosterically activated by GTP, when glutamine is the substrate; GTP has no effect on the reaction when ammonia is the substrate. The allosteric effector GTP functions by stabilizing the protein conformation that binds the tetrahedral intermediate(s) formed during glutamine hydrolysis. Inhibited by the product CTP, via allosteric rather than competitive inhibition. Functionally, catalyzes the ATP-dependent amination of UTP to CTP with either L-glutamine or ammonia as the source of nitrogen. Regulates intracellular CTP levels through interactions with the four ribonucleotide triphosphates. This chain is CTP synthase, found in Prochlorococcus marinus (strain MIT 9303).